The primary structure comprises 100 residues: Urease subunit gamma (100 aa).

The protein belongs to the urease gamma subunit family. Heterotrimer of UreA (gamma), UreB (beta) and UreC (alpha) subunits. Three heterotrimers associate to form the active enzyme.

The protein localises to the cytoplasm. The enzyme catalyses urea + 2 H2O + H(+) = hydrogencarbonate + 2 NH4(+). It functions in the pathway nitrogen metabolism; urea degradation; CO(2) and NH(3) from urea (urease route): step 1/1. The chain is Urease subunit gamma from Mycolicibacterium gilvum (strain PYR-GCK) (Mycobacterium gilvum (strain PYR-GCK)).